Here is a 475-residue protein sequence, read N- to C-terminus: Ribulose bisphosphate carboxylase large chain (475 aa).

A propeptide spanning residues 1 to 2 is cleaved from the precursor; it reads MS. Pro3 carries the N-acetylproline modification. Lys14 is modified (N6,N6,N6-trimethyllysine). Substrate is bound by residues Asn123 and Thr173. Residue Lys175 is the Proton acceptor of the active site. Lys177 provides a ligand contact to substrate. The Mg(2+) site is built by Lys201, Asp203, and Glu204. Lys201 carries the post-translational modification N6-carboxylysine. His294 functions as the Proton acceptor in the catalytic mechanism. Substrate is bound by residues Arg295, His327, and Ser379.

Belongs to the RuBisCO large chain family. Type I subfamily. As to quaternary structure, heterohexadecamer of 8 large chains and 8 small chains; disulfide-linked. The disulfide link is formed within the large subunit homodimers. Mg(2+) serves as cofactor. In terms of processing, the disulfide bond which can form in the large chain dimeric partners within the hexadecamer appears to be associated with oxidative stress and protein turnover.

Its subcellular location is the plastid. The protein resides in the chloroplast. It catalyses the reaction 2 (2R)-3-phosphoglycerate + 2 H(+) = D-ribulose 1,5-bisphosphate + CO2 + H2O. It carries out the reaction D-ribulose 1,5-bisphosphate + O2 = 2-phosphoglycolate + (2R)-3-phosphoglycerate + 2 H(+). Functionally, ruBisCO catalyzes two reactions: the carboxylation of D-ribulose 1,5-bisphosphate, the primary event in carbon dioxide fixation, as well as the oxidative fragmentation of the pentose substrate in the photorespiration process. Both reactions occur simultaneously and in competition at the same active site. This chain is Ribulose bisphosphate carboxylase large chain, found in Bouvardia ternifolia (Firecrackerbush).